We begin with the raw amino-acid sequence, 404 residues long: Tripartite motif-containing 13 (404 aa).

The RING-type zinc finger occupies 10–56 (CPICCCLFEDPRVLPCSHSFCKKCLEGILDGNRSPTWRPPFKCPTCR). Residues 87–129 (PRMSQCRVHSGQPLNIFCATDLKLICGFCATTGDHKGHKFCAL) form a B box-type zinc finger. Zn(2+)-binding residues include Cys-92, His-95, Cys-115, and His-121. The chain crosses the membrane as a helical span at residues 102–119 (IFCATDLKLICGFCATTG). A coiled-coil region spans residues 186-236 (KLLRTLEHKRSEILSDLETLKLAVMQTFDPEINRLRSALEEQRRALNIAES).

The protein resides in the endoplasmic reticulum membrane. Its pathway is protein modification; protein ubiquitination. Its function is as follows. E3 ubiquitin ligase involved in the retrotranslocation and turnover of membrane and secretory proteins from the ER through a set of processes named ER-associated degradation (ERAD). This process acts on misfolded proteins as well as in the regulated degradation of correctly folded proteins. In Danio rerio (Zebrafish), this protein is Tripartite motif-containing 13 (trim13).